The primary structure comprises 467 residues: Cytochrome P450 85A3 (467 aa).

A helical membrane pass occupies residues 2–22 (AIFLIIFVVFFGFCILSTPLF). Cysteine 417 provides a ligand contact to heme.

It belongs to the cytochrome P450 family. Requires heme as cofactor. Expressed in fruits.

The protein localises to the membrane. The catalysed reaction is 6-deoxocastasterone + reduced [NADPH--hemoprotein reductase] + O2 = 6alpha-hydroxycastasterone + oxidized [NADPH--hemoprotein reductase] + H2O + H(+). It catalyses the reaction 6alpha-hydroxycastasterone + reduced [NADPH--hemoprotein reductase] + O2 = castasterone + oxidized [NADPH--hemoprotein reductase] + 2 H2O + H(+). It carries out the reaction castasterone + reduced [NADPH--hemoprotein reductase] + O2 = brassinolide + oxidized [NADPH--hemoprotein reductase] + H2O + H(+). The enzyme catalyses 6-deoxocastasterone + 2 reduced [NADPH--hemoprotein reductase] + 2 O2 = castasterone + 2 oxidized [NADPH--hemoprotein reductase] + 3 H2O + 2 H(+). The protein operates within plant hormone biosynthesis; brassinosteroid biosynthesis. Functionally, catalyzes the C6-oxidation step in brassinosteroids biosynthesis. Converts 6-deoxocastasterone (6-deoxoCS) to castasterone (CS), and castasterone (CS) to brassinolide (BL). In Solanum lycopersicum (Tomato), this protein is Cytochrome P450 85A3.